Reading from the N-terminus, the 488-residue chain is 3-octaprenyl-4-hydroxybenzoate carboxy-lyase (488 aa).

Asn172 lines the Mn(2+) pocket. Prenylated FMN contacts are provided by residues Ile175–Arg177, Arg189–Leu191, and Arg194–Gly195. Glu238 serves as a coordination point for Mn(2+). The active-site Proton donor is Asp287.

It belongs to the UbiD family. As to quaternary structure, homohexamer. It depends on prenylated FMN as a cofactor. Mn(2+) is required as a cofactor.

The protein resides in the cell membrane. It catalyses the reaction a 4-hydroxy-3-(all-trans-polyprenyl)benzoate + H(+) = a 2-(all-trans-polyprenyl)phenol + CO2. It functions in the pathway cofactor biosynthesis; ubiquinone biosynthesis. Its function is as follows. Catalyzes the decarboxylation of 3-octaprenyl-4-hydroxy benzoate to 2-octaprenylphenol, an intermediate step in ubiquinone biosynthesis. This Pseudoalteromonas translucida (strain TAC 125) protein is 3-octaprenyl-4-hydroxybenzoate carboxy-lyase.